The following is a 367-amino-acid chain: F-box only protein 25 (367 aa).

The segment at 1-83 (MPFLGQDWRS…NDTNTQSFYR (83 aa)) is interaction with beta-actin. Positions 226-274 (LTLSDLPLHMLNNILYRFSDGWDIITLGQVTPTLYMLSEDRQLWKKLCQ) constitute an F-box domain.

As to quaternary structure, part of a SCF (SKP1-cullin-F-box) protein ligase complex consisting of FBXO25, SKP1, CUL1 and RBX1. Interacts directly with SKP1 and CUL1. Interacts (via C-terminus) with beta-actin (via N-terminus). As to expression, expressed in all brain tissue observed.

The protein localises to the nucleus. It functions in the pathway protein modification; protein ubiquitination. In terms of biological role, substrate-recognition component of the SCF (SKP1-CUL1-F-box protein)-type E3 ubiquitin ligase complex. May play a role in accumulation of expanded polyglutamine (polyQ) protein huntingtin (HTT). In Homo sapiens (Human), this protein is F-box only protein 25 (FBXO25).